Reading from the N-terminus, the 201-residue chain is Recombination protein RecR (201 aa).

Residues 57–72 (CTHCRTFTEEESCAIC) form a C4-type zinc finger. One can recognise a Toprim domain in the interval 81–176 (GFLCVVEQPS…KVSRIAHGIP (96 aa)).

This sequence belongs to the RecR family.

Functionally, may play a role in DNA repair. It seems to be involved in an RecBC-independent recombinational process of DNA repair. It may act with RecF and RecO. This chain is Recombination protein RecR, found in Histophilus somni (strain 129Pt) (Haemophilus somnus).